A 97-amino-acid chain; its full sequence is Apolipoprotein C-II (97 aa).

The signal sequence occupies residues 1 to 22 (MGSRFFLALFLVILMLGNEVQG). The tract at residues 63–71 (SMDEKLRDM) is lipid binding. Residues 75 to 97 (SSAAMSTYAGIFTDQLLTLLRGE) are lipoprotein lipase cofactor.

Belongs to the apolipoprotein C2 family. As to expression, adult and fetal liver, intestine and peritoneal macrophages.

It is found in the secreted. In terms of biological role, component of chylomicrons, very low-density lipoproteins (VLDL), low-density lipoproteins (LDL), and high-density lipoproteins (HDL) in plasma. Plays an important role in lipoprotein metabolism as an activator of lipoprotein lipase. The chain is Apolipoprotein C-II (Apoc2) from Mus musculus (Mouse).